Here is a 1481-residue protein sequence, read N- to C-terminus: MEGAKGPRLRGFLSGSLATWALGLAGLVGEAEESAGGTEEEEEEEEEEGALCTEKRFLRLIDGALLLRVLGIIAPSSRGGLRMVRGRDGPAACRMWNLCHLWGRLRDFYQEELQLLILSPPPDLQTMGCDPFSEEAVDELESILRLLLGASVQCEHRELFIRHIRGLSLDVQSELAGAIQEVTQPGAGVVLALAGPESGELVAEELEMQLRSLTGMMSRLARERDLGAQRLAELLLEREPAHLLLPEAPANASAEGVSHHLALQLTNAKAQLRRLRQEVEEKAEQLLDSQAEVQGLEAEIRRLRQETQALSAQAKRAELYREEAEALRERAGRLPRLQEELRRCREKLQAAEVFKGQLEEERVLSEALEASKVLLEEQLEVARERSARLHETQRENLLLRTRLGEAHADLDSLRHQLEQLVEENVELELELQRSLEPPPGSPGEASLPGAAPSLQDEVREAEAGRLRAVERENRELRGQLQMLQAQLGSQHPLLEEQRENSRQPPVPNRDPATPSALHHSPQSPACQIGGEGSESLDLPSPASYSDITRSPKCSQAPDSHPELESPLQMVSQDPQTSDQALQESDPTVETHQCLEKSGHRVPLQSPIVWDPPQGPEVRIEVQELLGETGSREAPQGELVHKAQVLKQESPKCRPRSAELTLREPLKDQKALDRELELSKQQKETGRHEQRPKGLESKLGPQKPQQTSEGVPDAWSREEPTPGETLVSAIPEEQALRDEVAQLRREVAGLEVKLQAQAQRLEARSAEALCLSEELAQARRTEAEAHQEAEAQAREQARLREAVDTASLELEAASREREALAEALAAAGRERRQWERDGPRLRAQVEAAEQQVQALESQVRCHLEEAEREHAEKQALREELEKAVLRGQELGDRLEHLQEELEQAALERQKFLQEQENQHQRYRHLEQRLEAELQAASTSKEEALMELKARALQLEEELIQLRQYPVDLATGARAGPRTVETQNGRLIEVERNNATLVAEKAALQGQLQHLEGQLGSLQGRAQELLLQSQRAQEHSSRLQAEKSMMEMQGQELHRKLGVLEEEVRAARRAQEETRGQQQALLRDHEALVQLQRRQETELEGLLVRHRDLKANMRALELAHRELQGRHEQLQAQRANVEAQEVALLAERERLMQDGHRQRGLEEELRRLQNEHERAQMLLAEVSRERGELQGERGELRSRLARLELERAQLEIQSQQLRESNQQLDLSACRLTTQCELLTQLRSAQEEENRQLLAEVQALSRENRELLERSLESRDHLHREQREYLDQLNALRREKQKLVEKIMDQYRVLEPGPLPRTKKGSWLADKVKRLIRPRREGALHGGPRLGADGAGSTESLGGPLETELPEGREADGTGSSSPAPMRRVQSSLCLGDETLAGGQRRRLSSRFPGGRSSASFSPGDTPRQRFRQRRPGPLGAPSTHSKGSGVEWDGSIKTLSEHEADDTREAFQEQKPEKQFLTPSLSQ.

Coiled-coil stretches lie at residues 200 to 225 and 258 to 491; these read ELVA…RERD and SHHL…GSQH. Disordered regions lie at residues 430–458, 494–731, and 1331–1481; these read ELQR…QDEV, LEEQ…AIPE, and PRRE…SLSQ. Ser441 carries the post-translational modification Phosphoserine. Polar residues-rich tracts occupy residues 542–557 and 568–590; these read ASYS…SQAP and QMVS…TVET. A Phosphoserine modification is found at Ser649. Basic and acidic residues predominate over residues 660–695; it reads TLREPLKDQKALDRELELSKQQKETGRHEQRPKGLE. The stretch at 731-1308 forms a coiled coil; that stretch reads EEQALRDEVA…KIMDQYRVLE (578 aa). Ser1353 and Ser1384 each carry phosphoserine. The segment covering 1371–1386 has biased composition (polar residues); that stretch reads TGSSSPAPMRRVQSSL. The span at 1453-1472 shows a compositional bias: basic and acidic residues; the sequence is LSEHEADDTREAFQEQKPEK.

It belongs to the CCDC88 family. As to quaternary structure, homodimer. Interacts with DOCK8. Interacts (via C-terminus) with intact microtubules. Interacts with dynein-dynactin motor complex. Interacts (via C-terminus) with HSPA5. In terms of tissue distribution, abundantly expressed in immune cells, including both CD4(+) and CD8(+) T-cells and in myeloid cells (at protein level). Expressed in endothelium (at protein level). Expressed specifically in spleen, bone marrow, lymph nodes and thymus. Expressed in liver and heart.

The protein resides in the membrane. The protein localises to the cytoplasm. Its subcellular location is the cytoskeleton. It localises to the microtubule organizing center. It is found in the endoplasmic reticulum. The protein resides in the golgi apparatus. Its function is as follows. Acts as a positive regulator of T-cell maturation and inflammatory function. Required for several functions of T-cells in both the CD4(+) and the CD8(+) compartments and this includes expression of cell surface markers of activation, proliferation, and cytokine production in response to specific or non-specific stimulation and during the course of infection with the mouse malaria parasite Plasmodium berghei. Enhances NK cell cytotoxicity by positively regulating polarization of microtubule-organizing center (MTOC) to cytotoxic synapse, lytic granule transport along microtubules, and dynein-mediated clustering to MTOC. Interacts with HSPA5 and stabilizes the interaction between HSPA5 and ERN1, leading to suppression of ERN1-induced JNK activation and endoplasmic reticulum stress-induced apoptosis. In Mus musculus (Mouse), this protein is Coiled-coil domain-containing protein 88B (Ccdc88b).